The following is a 323-amino-acid chain: CTD kinase subunit beta (323 aa).

Belongs to the cyclin family. As to quaternary structure, CTDK-I consists of three subunits, CTK1, CTK2 and CTK3 (also called alpha, beta and gamma). Interacts with CTK1. Heterodimerization with CTK3 is required to protect this subunit from degradation. Post-translationally, phosphorylated. Ubiquitinated. Phosphorylation and ubiquitination lead to degradation in growth-related way by the ubiquitin-proteasome pathway. Neither phosphorylation nor degradation requires association with CTK1.

It is found in the nucleus. The protein localises to the nucleolus. Its function is as follows. Cyclin subunit of the CTDK-I complex, which hyperphosphorylates the C-terminal heptapeptide repeat domain (CTD) of the largest RNA polymerase II subunit. CTDK-I phosphorylates 'Ser-5' if the CTD substrate is not phosphorylated at 'Ser-5', but will phosphorylate 'Ser-2' of a CTD substrate if 'Ser-5' is already phosphorylated. CTDK-I is also more reactive toward substrates that are prephosphorylated at 'Ser-2' or 'Ser-5' compared with an unphosphorylated CTD substrate, therefore efficiently creating doubly phosphorylated CTD repeats. Involved in RNA polymerase II transcriptional elongation, and as part of the CTDK-I complex, pre-mRNA 3'-end processing and SET2 mediated H3K36 methylation. Together with CTK3, required for CTK1 CTD kinase activation. Required for DNA damage induced transcription. Involved in the adaptation to alternative carbon sources, including galactose, glycerol and ethanol, but not raffinose. Required for the integrity of the rDNA locus. This chain is CTD kinase subunit beta (CTK2), found in Saccharomyces cerevisiae (strain ATCC 204508 / S288c) (Baker's yeast).